A 137-amino-acid polypeptide reads, in one-letter code: 3-hydroxyacyl-[acyl-carrier-protein] dehydratase FabZ (137 aa).

H46 is an active-site residue.

The protein belongs to the thioester dehydratase family. FabZ subfamily.

It localises to the cytoplasm. It catalyses the reaction a (3R)-hydroxyacyl-[ACP] = a (2E)-enoyl-[ACP] + H2O. Involved in unsaturated fatty acids biosynthesis. Catalyzes the dehydration of short chain beta-hydroxyacyl-ACPs and long chain saturated and unsaturated beta-hydroxyacyl-ACPs. This chain is 3-hydroxyacyl-[acyl-carrier-protein] dehydratase FabZ, found in Thermotoga maritima (strain ATCC 43589 / DSM 3109 / JCM 10099 / NBRC 100826 / MSB8).